We begin with the raw amino-acid sequence, 180 residues long: Bifunctional protein PyrR (180 aa).

Substrate-binding positions include 39-40 (TR), 103-111 (DDVLYTGRT), and arginine 136. Positions 99–111 (VILIDDVLYTGRT) match the PRPP-binding motif.

It belongs to the purine/pyrimidine phosphoribosyltransferase family. PyrR subfamily. As to quaternary structure, homodimer and homohexamer; in equilibrium.

It carries out the reaction UMP + diphosphate = 5-phospho-alpha-D-ribose 1-diphosphate + uracil. Functionally, regulates transcriptional attenuation of the pyrimidine nucleotide (pyr) operon by binding in a uridine-dependent manner to specific sites on pyr mRNA. This disrupts an antiterminator hairpin in the RNA and favors formation of a downstream transcription terminator, leading to a reduced expression of downstream genes. In terms of biological role, also displays a weak uracil phosphoribosyltransferase activity which is not physiologically significant. This is Bifunctional protein PyrR from Halalkalibacterium halodurans (strain ATCC BAA-125 / DSM 18197 / FERM 7344 / JCM 9153 / C-125) (Bacillus halodurans).